A 620-amino-acid polypeptide reads, in one-letter code: UvrABC system protein C (620 aa).

Positions 13 to 92 (DKPGVYIMKN…IKKYSPRYNI (80 aa)) constitute a GIY-YIG domain. In terms of domain architecture, UVR spans 204–239 (TSIIKKLKLEMEKAAEELEFEKAAKIRDRILAIELI).

It belongs to the UvrC family. In terms of assembly, interacts with UvrB in an incision complex.

Its subcellular location is the cytoplasm. In terms of biological role, the UvrABC repair system catalyzes the recognition and processing of DNA lesions. UvrC both incises the 5' and 3' sides of the lesion. The N-terminal half is responsible for the 3' incision and the C-terminal half is responsible for the 5' incision. The sequence is that of UvrABC system protein C from Clostridium perfringens (strain ATCC 13124 / DSM 756 / JCM 1290 / NCIMB 6125 / NCTC 8237 / Type A).